The following is a 579-amino-acid chain: Arginine--tRNA ligase (579 aa).

The 'HIGH' region motif lies at 127–137; it reads PNLAKEMHVGH.

It belongs to the class-I aminoacyl-tRNA synthetase family. Monomer.

Its subcellular location is the cytoplasm. The enzyme catalyses tRNA(Arg) + L-arginine + ATP = L-arginyl-tRNA(Arg) + AMP + diphosphate. The chain is Arginine--tRNA ligase from Ectopseudomonas mendocina (strain ymp) (Pseudomonas mendocina).